The sequence spans 274 residues: Enoyl-CoA isomerase/hydratase fer4 (274 aa).

Substrate-binding positions include 77–81 and G124; that span reads AGADL. Positions 79–109 form a coiled coil; sequence ADLKERREMSEAEVIEFLQDLRHMLEQVEKL.

Belongs to the enoyl-CoA hydratase/isomerase family.

The enzyme catalyses a (3S)-3-hydroxyacyl-CoA = a (2E)-enoyl-CoA + H2O. The catalysed reaction is a 4-saturated-(3S)-3-hydroxyacyl-CoA = a (3E)-enoyl-CoA + H2O. It functions in the pathway siderophore biosynthesis. Functionally, enoyl-CoA isomerase/hydratase; part of the gene cluster that mediates the biosynthesis of siderophore ferrichrome A which is contributing to organismal virulence. The first step of ferrichrome A biosynthesis is performed by the HMG-CoA synthase hcs1 which catalyzes the generation of HMG-CoA and CoA using acetoacetyl-CoA and acetyl-CoA as substrates. The enoyl-CoA isomerase/hydratase fer4 then catalyzes the conversion of hcs1-produced HMG-CoA to methylglutaconyl-CoA. The acyltransferase fer5 then fuses the fer4-generated methylglutaconyl-CoA with sid1-generated hydroxyornithine to yield methylglutaconyl hydroxyornithine. Methylglutaconyl hydroxyornithine is then available for use by the NRPS fer3 to generate ferrichrome A. This is Enoyl-CoA isomerase/hydratase fer4 from Mycosarcoma maydis (Corn smut fungus).